The sequence spans 287 residues: ATP synthase gamma chain (287 aa).

The protein belongs to the ATPase gamma chain family. F-type ATPases have 2 components, CF(1) - the catalytic core - and CF(0) - the membrane proton channel. CF(1) has five subunits: alpha(3), beta(3), gamma(1), delta(1), epsilon(1). CF(0) has three main subunits: a, b and c.

It localises to the cell inner membrane. Its function is as follows. Produces ATP from ADP in the presence of a proton gradient across the membrane. The gamma chain is believed to be important in regulating ATPase activity and the flow of protons through the CF(0) complex. The protein is ATP synthase gamma chain of Geotalea daltonii (strain DSM 22248 / JCM 15807 / FRC-32) (Geobacter daltonii).